The sequence spans 1406 residues: Inactive tyrosine-protein kinase PRAG1 (1406 aa).

Position 148 is a phosphoserine (Ser148). A compositionally biased stretch (basic and acidic residues) spans 184 to 193; that stretch reads EEKAVHKEKP. Disordered regions lie at residues 184–205 and 217–248; these read EEKAVHKEKPSFPYQDRPSTQE and TTSGCHQGPGPLRESLPSEDDSDQRCSPSGDS. Phosphotyrosine occurs at positions 253, 365, and 413. Disordered regions lie at residues 372–470 and 484–854; these read PAPE…TPQV and DHRT…HSET. Basic and acidic residues predominate over residues 526-542; the sequence is RESHAHSASESKPKERP. The span at 546–576 shows a compositional bias: low complexity; that stretch reads PKLSKSSPVGSPVSPSAGGPPVSPLADLSDG. Composition is skewed to polar residues over residues 660–671 and 678–695; these read NGPTDHSNSTTW and DGSSGQNSKVGTGMSKSA. Phosphoserine is present on residues Ser696 and Ser745. 2 stretches are compositionally biased toward polar residues: residues 737–746 and 754–770; these read SQGSAESLSP and SFTTGSTDSLASDSRTC. Position 782 is a phosphoserine (Ser782). Residues 798 to 808 show a composition bias toward polar residues; sequence SGSTEDVSPSG. Ser826 bears the Phosphoserine mark. A required for homodimerization region spans residues 933-976; it reads STQLQLHGLLSNISSKEGTYAKLGGLYTQSLARLVAKCEDLFMG. Residues 978-1329 enclose the Protein kinase domain; that stretch reads QKKELHFNEN…EAKRVLQCLL (352 aa). Over residues 1163–1173 the composition is skewed to pro residues; the sequence is GPAPAPAPAPA. The disordered stretch occupies residues 1163 to 1206; sequence GPAPAPAPAPAPAAAAPPCSSAAPPAGGTLSPAAGPASPEGPRE. Residues 1174 to 1202 are compositionally biased toward low complexity; the sequence is PAAAAPPCSSAAPPAGGTLSPAAGPASPE. The tract at residues 1331–1406 is required for homodimerization; the sequence is GPRRELVQQP…LQSLKLLQLL (76 aa).

This sequence belongs to the protein kinase superfamily. Homodimer. Dimerization leads to the catalytic activation of CSK. Interacts (via C-terminus) with RND2. Interacts with CSK (via SH2 domain) in a Tyr-413 phosphorylation-dependent manner; this interaction potentiates kinase activity of CSK. Interacts with PEAK1. Interacts with NOTCH1 intracellular domain (N1ICD). Forms a complex with N1ICD and MAML1, in a MAML1-dependent manner. Post-translationally, phosphorylated by CSK on Tyr-253, Tyr-365, and Tyr-413; Tyr-413 is a primary site of phosphorylation.

It localises to the cytoplasm. The protein localises to the cell junction. It is found in the focal adhesion. The protein resides in the nucleus. In terms of biological role, catalytically inactive protein kinase that acts as a scaffold protein. Functions as an effector of the small GTPase RND2, which stimulates RhoA activity and inhibits NGF-induced neurite outgrowth. Promotes Src family kinase (SFK) signaling by regulating the subcellular localization of CSK, a negative regulator of these kinases, leading to the regulation of cell morphology and motility by a CSK-dependent mechanism. Acts as a critical coactivator of Notch signaling. This is Inactive tyrosine-protein kinase PRAG1 from Homo sapiens (Human).